We begin with the raw amino-acid sequence, 288 residues long: UDP-3-O-acyl-N-acetylglucosamine deacetylase (288 aa).

His-79, His-236, and Asp-240 together coordinate Zn(2+). Catalysis depends on His-263, which acts as the Proton donor.

The protein belongs to the LpxC family. Requires Zn(2+) as cofactor.

It catalyses the reaction a UDP-3-O-[(3R)-3-hydroxyacyl]-N-acetyl-alpha-D-glucosamine + H2O = a UDP-3-O-[(3R)-3-hydroxyacyl]-alpha-D-glucosamine + acetate. The protein operates within glycolipid biosynthesis; lipid IV(A) biosynthesis; lipid IV(A) from (3R)-3-hydroxytetradecanoyl-[acyl-carrier-protein] and UDP-N-acetyl-alpha-D-glucosamine: step 2/6. Functionally, catalyzes the hydrolysis of UDP-3-O-myristoyl-N-acetylglucosamine to form UDP-3-O-myristoylglucosamine and acetate, the committed step in lipid A biosynthesis. The sequence is that of UDP-3-O-acyl-N-acetylglucosamine deacetylase from Rickettsia prowazekii (strain Madrid E).